The following is a 301-amino-acid chain: Nitric oxide synthase-interacting protein (301 aa).

Ser-36 carries the phosphoserine modification. The tract at residues 55-75 (DPVVTPDGYLYEREAILEYIL) is U-box-like. A Nuclear localization signal motif is present at residues 78–101 (KKEIARQMKAYEKQRGTRREEQKE). Phosphoserine is present on Ser-107. The interval 132–157 (KALSGTSPDDVQPGPSVGPPSKDKDK) is disordered.

Belongs to the NOSIP family. In terms of assembly, interacts with NOS1 and NOS3. Interacts with PP2A holoenzyme, containing PPP2CA, PPP2CB, PPP2R1A and PPP2R2A subunits. As to expression, expressed in heart, brain and lung. Present in endothelial cells (at protein level).

It is found in the cytoplasm. The protein resides in the nucleus. It carries out the reaction S-ubiquitinyl-[E2 ubiquitin-conjugating enzyme]-L-cysteine + [acceptor protein]-L-lysine = [E2 ubiquitin-conjugating enzyme]-L-cysteine + N(6)-ubiquitinyl-[acceptor protein]-L-lysine.. In terms of biological role, E3 ubiquitin-protein ligase that is essential for proper development of the forebrain, the eye, and the face. Catalyzes monoubiquitination of serine/threonine-protein phosphatase 2A (PP2A) catalytic subunit PPP2CA/PPP2CB. Negatively regulates nitric oxide production by inducing NOS1 and NOS3 translocation to actin cytoskeleton and inhibiting their enzymatic activity. The protein is Nitric oxide synthase-interacting protein (NOSIP) of Homo sapiens (Human).